The primary structure comprises 421 residues: Acyl-coenzyme A thioesterase 6 (421 aa).

Active-site charge relay system residues include Ser-232, Asp-326, and His-360. The Peroxisome targeting signal signature appears at 419-421; sequence SKI.

This sequence belongs to the C/M/P thioester hydrolase family.

The protein resides in the peroxisome. Its subcellular location is the cytoplasm. It catalyses the reaction pristanoyl-CoA + H2O = 2,6,10,14-tetramethylpentadecanoate + CoA + H(+). The catalysed reaction is phytanoyl-CoA + H2O = 3,7,11,15-tetramethylhexadecanoate + CoA + H(+). The protein operates within lipid metabolism; fatty acid metabolism. Catalyzes the hydrolysis of acyl-CoAs into free fatty acids and coenzyme A (CoASH), regulating their respective intracellular levels. Catalyzes the hydrolysis of phytanoyl-CoA and pristanoyl-CoA, two methyl-branched fatty acids derived from phytol, that enter the body via the diet. The protein is Acyl-coenzyme A thioesterase 6 of Homo sapiens (Human).